Reading from the N-terminus, the 169-residue chain is Cilia- and flagella-associated protein HOATZ (169 aa).

3 disordered regions span residues 1–21 (METGPSEEPSGRKESQEMCPP), 52–89 (SQLVLRRDSSQRLPVARPRRSRGSENSHSSQSFHLASN), and 144–169 (KAKEHKAKKVVSESDKEDQEEVKTLD). Polar residues predominate over residues 75 to 89 (SENSHSSQSFHLASN).

This sequence belongs to the HOATZ family.

Its subcellular location is the cytoplasm. The protein resides in the cell projection. The protein localises to the cilium. In terms of biological role, required for motile ciliogenesis and flagellar genesis by mediating the maturation of the glycolytic enzyme ENO4. The sequence is that of Cilia- and flagella-associated protein HOATZ from Homo sapiens (Human).